The following is a 379-amino-acid chain: MAKKTKKTEEITKKFGDERWKALDDALKNIGKDFGKGAVMRLGERAEEKVQVMSSGSLALDIALGAGGYPKGRIIEIYGPESSGKTTVALHAVAQTQKEGGIAAFIDAEHALDPAYAAALGVNIDELLLSQPDSGEQGLEIACKLIDSGAVDLVVVDSVAALVPRAEIDGDIGDSHVGLQARMMSQAMRKLSASINKTKTIAIFINQLREKVGIMFGNPETTPGGRALKFYAYVALDVRGNTQIKGTGDKKDQNVGKETKIKVVKNKVAPPFKEAFVEIMYGEGISQTGELVKIASDIGIIQKAGAWFSYNGEKIGQGSENAKKYLADHPEIFAEIDHKVRVHYGLIELDEDDVVEDTQVEDTSDELILDLDSTIEIEE.

Residue 79–86 coordinates ATP; it reads GPESSGKT.

The protein belongs to the RecA family.

It localises to the cytoplasm. Can catalyze the hydrolysis of ATP in the presence of single-stranded DNA, the ATP-dependent uptake of single-stranded DNA by duplex DNA, and the ATP-dependent hybridization of homologous single-stranded DNAs. It interacts with LexA causing its activation and leading to its autocatalytic cleavage. In Streptococcus thermophilus, this protein is Protein RecA.